The primary structure comprises 180 residues: Probable phospholipid hydroperoxide glutathione peroxidase (180 aa).

The active site involves Cys-54.

The protein belongs to the glutathione peroxidase family.

Its subcellular location is the cytoplasm. It catalyses the reaction a hydroperoxy polyunsaturated fatty acid + 2 glutathione = a hydroxy polyunsaturated fatty acid + glutathione disulfide + H2O. Its function is as follows. Protects cells and enzymes from oxidative damage, by catalyzing the reduction of hydrogen peroxide, lipid peroxides and organic hydroperoxide, by glutathione. The protein is Probable phospholipid hydroperoxide glutathione peroxidase (GPXHA-2) of Helianthus annuus (Common sunflower).